The chain runs to 166 residues: Keratin, type II cytoskeletal 68 kDa, component IB (166 aa).

The region spanning 1–41 is the IF rod domain; the sequence is EAKDDLARLLRDYQDAMNVKLALDVEIATYRKLLEGEECRM. A coil 2B region spans residues 1–41; that stretch reads EAKDDLARLLRDYQDAMNVKLALDVEIATYRKLLEGEECRM. The tail stretch occupies residues 42–166; it reads SGECPSAVSI…FSQSSQRTSR (125 aa). The span at 122 to 146 shows a compositional bias: gly residues; the sequence is GFGGGSSGFGSGSGGRSGVSGGGLS. The disordered stretch occupies residues 122-166; the sequence is GFGGGSSGFGSGSGGRSGVSGGGLSSGSSRGGSVRFSQSSQRTSR. Low complexity predominate over residues 147 to 166; that stretch reads SGSSRGGSVRFSQSSQRTSR.

It belongs to the intermediate filament family. As to quaternary structure, heterotetramer of two type I and two type II keratins.

This chain is Keratin, type II cytoskeletal 68 kDa, component IB, found in Bos taurus (Bovine).